A 553-amino-acid chain; its full sequence is Protein PNS1 (553 aa).

The segment at 1–53 (MFGEGNKPTEPVPAYDAGQDPFQGPNASKNQYQGSAADYNGAPPPPASQPGNQ) is disordered. Residues 1–94 (MFGEGNKPTE…EDSKPKWNDW (94 aa)) lie on the Cytoplasmic side of the membrane. A compositionally biased stretch (polar residues) spans 25–34 (PNASKNQYQG). A helical membrane pass occupies residues 95 to 115 (PFTIFFAGCVIAFIVVAAITL). Over 116–142 (RAWSQNSSSQGSGVYDGANTGTLTTNS) the chain is Extracellular. Residue Asn121 is glycosylated (N-linked (GlcNAc...) asparagine). Residues 143–163 (AIMLAISCIIAFVFSIIGIVL) traverse the membrane as a helical segment. The Cytoplasmic portion of the chain corresponds to 164–169 (ARMFPK). Residues 170-190 (FFIIAGILFNIIAGLATAIMY) traverse the membrane as a helical segment. The Extracellular segment spans residues 191 to 192 (LS). Residues 193 to 213 (LKYYSAGIVFLVFTAICALFY) form a helical membrane-spanning segment. At 214–241 (WRMRHRIPFTVAVLKTVMDVMKSYPQTW) the chain is on the cytoplasmic side. Residues 242–262 (FVTLIGSIIATAFSILFSAVI) form a helical membrane-spanning segment. The Extracellular portion of the chain corresponds to 263-287 (VATYMKYDDKANNPGCSTNGGSCSN). The helical transmembrane segment at 288–308 (AKLIGLLVLVFFCGYYIAEVI) threads the bilayer. The Cytoplasmic portion of the chain corresponds to 309-349 (RNVIHCTVSGIFGAWYYFSKSDQGMPKWPGFGALKRSLTYS). The helical transmembrane segment at 350-370 (FGSICFGSLIVTIIETLKAVL) threads the bilayer. Over 371-385 (RLAVDGVMGGGGADN) the chain is Extracellular. The helical transmembrane segment at 386-406 (GWMQCLALIANWIFSFLEWLA) threads the bilayer. Residues 407–450 (RYFNHYAYVFIALYGKPYLRAAKETWYMLREKGIDALINDNLVN) lie on the Cytoplasmic side of the membrane. The chain crosses the membrane as a helical span at residues 451 to 471 (VALSFFTLFTCYITTLFAYLY). Topologically, residues 472–484 (LRYTDPNYNDNNN) are extracellular. Residues 485–505 (FTPALMAFAFVIAMEICNVIT) form a helical membrane-spanning segment. Over 506 to 553 (ETIRSGTATFFVALGNDPEVFHLSYPERFDEIFRAYPEVLKKLSHQNV) the chain is Cytoplasmic.

The protein belongs to the CTL (choline transporter-like) family.

It is found in the cell membrane. Probably involved in transport through the plasma membrane. The sequence is that of Protein PNS1 (PNS1) from Kluyveromyces lactis (strain ATCC 8585 / CBS 2359 / DSM 70799 / NBRC 1267 / NRRL Y-1140 / WM37) (Yeast).